Consider the following 263-residue polypeptide: MRHEIWNEIRQQAPLIHNITNTVVANFSANGLLAIGASPVMADAIEEVAEMTFVSDALVLNIGTLGTMTEATMIRAGQAANEAGCPIVLDPVGVGATSFRRDVVERIMRHVRVSVIRGNAGEIATLIGVDWAARGVDAGDGACEPRQLALEAAKRYGCVVAVTGKEDMVSDGHVVMEVRGGTKRMTETTGTGCLLSAVVGACLAVEKNALKATVTAMSGYAYCGELASERAEGPGDFPIHFLNALHQLTQYTIPTNRIEVSTS.

M41 is a binding site for substrate. ATP contacts are provided by R117 and T163. G190 serves as a coordination point for substrate.

It belongs to the Thz kinase family. Mg(2+) is required as a cofactor.

It catalyses the reaction 5-(2-hydroxyethyl)-4-methylthiazole + ATP = 4-methyl-5-(2-phosphooxyethyl)-thiazole + ADP + H(+). It functions in the pathway cofactor biosynthesis; thiamine diphosphate biosynthesis; 4-methyl-5-(2-phosphoethyl)-thiazole from 5-(2-hydroxyethyl)-4-methylthiazole: step 1/1. Catalyzes the phosphorylation of the hydroxyl group of 4-methyl-5-beta-hydroxyethylthiazole (THZ). The sequence is that of Hydroxyethylthiazole kinase from Exiguobacterium sp. (strain ATCC BAA-1283 / AT1b).